Reading from the N-terminus, the 176-residue chain is Ribosome rescue factor SmrB (176 aa).

Positions 97 to 172 (LDMHGMTQQE…GDGALLVLLS (76 aa)) constitute a Smr domain.

Belongs to the SmrB family. In terms of assembly, associates with collided ribosomes, but not with correctly translating polysomes.

Its function is as follows. Acts as a ribosome collision sensor. Detects stalled/collided disomes (pairs of ribosomes where the leading ribosome is stalled and a second ribosome has collided with it) and endonucleolytically cleaves mRNA at the 5' boundary of the stalled ribosome. Stalled/collided disomes form a new interface (primarily via the 30S subunits) that binds SmrB. Cleaved mRNA becomes available for tmRNA ligation, leading to ribosomal subunit dissociation and rescue of stalled ribosomes. The protein is Ribosome rescue factor SmrB of Vibrio campbellii (strain ATCC BAA-1116).